We begin with the raw amino-acid sequence, 40 residues long: NLVQFGFMIECAIRNRQPALDFMNYGCYCGTVGRGTPVDD.

In terms of assembly, heterotrimer of alpha, beta, and gamma chains; non-covalently linked. As to expression, expressed by the venom gland.

The protein localises to the secreted. In terms of biological role, heterotrimer: Snake venom phospholipase A2 (PLA2) heterotrimer that acts as a potent presynaptic neurotoxin by blocking synaptic transmission and synaptic vesicle recycling. Enzymatic activity is essential for the neurotoxic effects. May act by binding in a calcium-dependent fashion to neurotonal pentraxin-1 (NPTX1) and neurotonal pentraxin-2 (NPTX2), but not to neuronal pentraxin receptor (NPTXR). Also binds to taipoxin-associated calcium binding protein 49 (RCN2), a protein localized in the lumen of endoplasmic reticulum. Monomer (beta chain): Snake venom phospholipase A2 homolog that is neither toxic nor enzymatically active. Does not bind calcium. The polypeptide is Neutral phospholipase A2 homolog cannitoxin beta chain 2 (Oxyuranus scutellatus canni (Papuan taipan)).